Consider the following 257-residue polypeptide: Methylthioribulose-1-phosphate dehydratase (257 aa).

The segment at 1-33 (MVSSQEKMASISDIIQKDEDSGSEKTESQDKEH) is disordered. Positions 15-33 (IQKDEDSGSEKTESQDKEH) are enriched in basic and acidic residues. Cysteine 107 serves as a coordination point for substrate. Zn(2+) is bound by residues histidine 125 and histidine 127. Glutamate 149 (proton donor/acceptor) is an active-site residue. Histidine 205 provides a ligand contact to Zn(2+).

The protein belongs to the aldolase class II family. MtnB subfamily. Requires Zn(2+) as cofactor.

It is found in the cytoplasm. It catalyses the reaction 5-(methylsulfanyl)-D-ribulose 1-phosphate = 5-methylsulfanyl-2,3-dioxopentyl phosphate + H2O. It participates in amino-acid biosynthesis; L-methionine biosynthesis via salvage pathway; L-methionine from S-methyl-5-thio-alpha-D-ribose 1-phosphate: step 2/6. In terms of biological role, catalyzes the dehydration of methylthioribulose-1-phosphate (MTRu-1-P) into 2,3-diketo-5-methylthiopentyl-1-phosphate (DK-MTP-1-P). Functions in the methionine salvage pathway. May play a role in apoptosis. This is Methylthioribulose-1-phosphate dehydratase from Esox lucius (Northern pike).